A 152-amino-acid chain; its full sequence is uncharacterized protein (152 aa).

The next 3 helical transmembrane spans lie at Leu-13–Phe-33, Leu-38–Met-58, and Trp-69–Ile-89.

It is found in the cell membrane. This is an uncharacterized protein from Mycoplasma pneumoniae (strain ATCC 29342 / M129 / Subtype 1) (Mycoplasmoides pneumoniae).